We begin with the raw amino-acid sequence, 328 residues long: 4-hydroxythreonine-4-phosphate dehydrogenase (328 aa).

Residues histidine 134 and threonine 135 each coordinate substrate. A divalent metal cation contacts are provided by histidine 164, histidine 209, and histidine 264. 3 residues coordinate substrate: lysine 272, asparagine 281, and arginine 290.

It belongs to the PdxA family. As to quaternary structure, homodimer. It depends on Zn(2+) as a cofactor. Mg(2+) serves as cofactor. The cofactor is Co(2+).

It is found in the cytoplasm. It carries out the reaction 4-(phosphooxy)-L-threonine + NAD(+) = 3-amino-2-oxopropyl phosphate + CO2 + NADH. Its pathway is cofactor biosynthesis; pyridoxine 5'-phosphate biosynthesis; pyridoxine 5'-phosphate from D-erythrose 4-phosphate: step 4/5. Its function is as follows. Catalyzes the NAD(P)-dependent oxidation of 4-(phosphooxy)-L-threonine (HTP) into 2-amino-3-oxo-4-(phosphooxy)butyric acid which spontaneously decarboxylates to form 3-amino-2-oxopropyl phosphate (AHAP). The chain is 4-hydroxythreonine-4-phosphate dehydrogenase from Shewanella denitrificans (strain OS217 / ATCC BAA-1090 / DSM 15013).